Reading from the N-terminus, the 312-residue chain is tRNA uridine(34) hydroxylase (312 aa).

Residues 130-225 (RGDEVVFFDG…YGEKFGNQGL (96 aa)) enclose the Rhodanese domain. Cys185 functions as the Cysteine persulfide intermediate in the catalytic mechanism.

This sequence belongs to the TrhO family.

The enzyme catalyses uridine(34) in tRNA + AH2 + O2 = 5-hydroxyuridine(34) in tRNA + A + H2O. In terms of biological role, catalyzes oxygen-dependent 5-hydroxyuridine (ho5U) modification at position 34 in tRNAs. This Corynebacterium efficiens (strain DSM 44549 / YS-314 / AJ 12310 / JCM 11189 / NBRC 100395) protein is tRNA uridine(34) hydroxylase.